A 308-amino-acid polypeptide reads, in one-letter code: GTP-binding protein RAD (308 aa).

The span at 1–15 shows a compositional bias: gly residues; sequence MTLNGGSGASGSRGA. A disordered region spans residues 1 to 86; that stretch reads MTLNGGSGAS…SDSLSSGGSG (86 aa). The residue at position 24 (R24) is an Omega-N-methylarginine. S26 carries the post-translational modification Phosphoserine. A compositionally biased stretch (low complexity) spans 57–82; it reads ATTAAGTRTQGQRLDWPEGSSDSLSS. Residues 98–105 and 203–206 each bind GTP; these read GAPGVGKS and NKSD. The interval 278-297 is calmodulin-binding; sequence AKRFLGRIVARNSRKMAFRA.

It belongs to the small GTPase superfamily. RGK family. As to quaternary structure, interacts with Calmodulin preferentially in the inactive, GDP-bound form. Interacts with CAMK2D. Interacts with CACNB2; interaction may be involved in beta-adrenergic regulation of heart rate and contractile force. Interaction with CACNB2 regulates the trafficking of CACNA1C to the cell membrane. In terms of processing, phosphorylation at Ser-26, Ser-39, Ser-273 and Ser-301 may be involved in regulating inhibition of voltage-gated L-type Ca(2+) channels.

The protein resides in the cell membrane. Its function is as follows. May regulate basal voltage-dependent L-type Ca(2+) currents and be required for beta-adrenergic augmentation of Ca(2+) influx in cardiomyocytes, thereby regulating increases in heart rate and contractile force. May play an important role in cardiac antiarrhythmia via the strong suppression of voltage-dependent L-type Ca(2+) currents. Regulates voltage-gated L-type calcium channel subunit alpha-1C trafficking to the cell membrane. Inhibits cardiac hypertrophy through the calmodulin-dependent kinase II (CaMKII) pathway. Inhibits phosphorylation and activation of CAMK2D. This is GTP-binding protein RAD (Rrad) from Mus musculus (Mouse).